The primary structure comprises 578 residues: A-type ATP synthase subunit A (578 aa).

228 to 235 (GPFGSGKT) lines the ATP pocket.

Belongs to the ATPase alpha/beta chains family. In terms of assembly, has multiple subunits with at least A(3), B(3), C, D, E, F, H, I and proteolipid K(x).

Its subcellular location is the cell membrane. The enzyme catalyses ATP + H2O + 4 H(+)(in) = ADP + phosphate + 5 H(+)(out). Component of the A-type ATP synthase that produces ATP from ADP in the presence of a proton gradient across the membrane. The A chain is the catalytic subunit. This is A-type ATP synthase subunit A from Methanosarcina acetivorans (strain ATCC 35395 / DSM 2834 / JCM 12185 / C2A).